A 75-amino-acid chain; its full sequence is MPQISRYSDQQVEQLLSELTNVLESHKAPVDLSLMVLGNMVTNLINSSVAPAQRQAIARSFAQALQSSINDDPAH.

This sequence belongs to the UPF0352 family.

In Klebsiella pneumoniae subsp. pneumoniae (strain ATCC 700721 / MGH 78578), this protein is UPF0352 protein KPN78578_25810.